Reading from the N-terminus, the 585-residue chain is Amyloid protein-binding protein 2 (585 aa).

TPR repeat units follow at residues 50 to 83 (QGRLCQLGSEFCELEVFAKVLRALDKRHLLHHCF), 120 to 153 (IQVGFVLGGFLSDAGWYSDAEKVFLSCLQLCTLH), 206 to 239 (AALYGELCALLFAKSHYDEAYKWCVEAMKEITAG), 288 to 321 (SDTLLDYGFYLLNVDNICQSVAIYQAALDIRQSV), 333 to 367 (HEDLAYSSYVHQYSSGKFDNALFHAERAIGIITHI), 429 to 462 (AKHYGNLGRLYQSMRKFKEAEEMHIKAIQIKEQL), 471 to 505 (ALSVGHLASLYNYDMNQYENAEKLYLRSIAIGKKL), and 514 to 547 (EYDYRGLIKLYNSIGNYEKVFEYHNVLSNWNRLR).

In terms of assembly, component of a CRL2 E3 ubiquitin-protein ligase complex, also named ECS (Elongin BC-CUL2/5-SOCS-box protein) complex, composed of CUL2, Elongin BC (ELOB and ELOC), RBX1 and substrate-specific adapter APPBP2. Interacts with APP; APP interaction inhibits the E3 ubiquitin-protein ligase activity of the CRL2(APPBP2) complex. Rapidly degraded by the proteasome upon overexpression of a C-terminal fragment of APP.

It localises to the nucleus. The protein resides in the cytoplasm. It is found in the cytoskeleton. Its subcellular location is the membrane. It participates in protein modification; protein ubiquitination. With respect to regulation, E3 ubiquitin-protein ligase activity of the CRL2(APPBP2) complex is inhibited by APP. Substrate-recognition component of a Cul2-RING (CRL2) E3 ubiquitin-protein ligase complex of the DesCEND (destruction via C-end degrons) pathway, which recognizes a C-degron located at the extreme C terminus of target proteins, leading to their ubiquitination and degradation. The C-degron recognized by the DesCEND pathway is usually a motif of less than ten residues and can be present in full-length proteins, truncated proteins or proteolytically cleaved forms. The CRL2(APPBP2) complex specifically recognizes proteins with a -Arg-Xaa-Xaa-Gly degron at the C-terminus, leading to their ubiquitination and degradation. The CRL2(APPBP2) complex mediates ubiquitination and degradation of truncated SELENOV selenoproteins produced by failed UGA/Sec decoding, which end with a -Arg-Xaa-Xaa-Gly degron. May play a role in intracellular protein transport: may be involved in the translocation of APP along microtubules toward the cell surface. This Mus musculus (Mouse) protein is Amyloid protein-binding protein 2.